Consider the following 835-residue polypeptide: Protein translocase subunit SecA (835 aa).

ATP is bound by residues glutamine 85, 103 to 107, and aspartate 495; that span reads GEGKT. A disordered region spans residues 806 to 835; the sequence is KVFLNNDSSDDESSKKRRTRKVRTSKKPWN. The segment covering 820–835 has biased composition (basic residues); the sequence is KKRRTRKVRTSKKPWN.

This sequence belongs to the SecA family. As to quaternary structure, monomer and homodimer. Part of the essential Sec protein translocation apparatus which comprises SecA, SecYEG and auxiliary proteins SecDF. Other proteins may also be involved.

It localises to the cell membrane. The protein resides in the cytoplasm. The catalysed reaction is ATP + H2O + cellular proteinSide 1 = ADP + phosphate + cellular proteinSide 2.. In terms of biological role, part of the Sec protein translocase complex. Interacts with the SecYEG preprotein conducting channel. Has a central role in coupling the hydrolysis of ATP to the transfer of proteins into and across the cell membrane, serving as an ATP-driven molecular motor driving the stepwise translocation of polypeptide chains across the membrane. The polypeptide is Protein translocase subunit SecA (Onion yellows phytoplasma (strain OY-M)).